Here is a 116-residue protein sequence, read N- to C-terminus: Large ribosomal subunit protein uL18 (116 aa).

The protein belongs to the universal ribosomal protein uL18 family. As to quaternary structure, part of the 50S ribosomal subunit; part of the 5S rRNA/L5/L18/L25 subcomplex. Contacts the 5S and 23S rRNAs.

Functionally, this is one of the proteins that bind and probably mediate the attachment of the 5S RNA into the large ribosomal subunit, where it forms part of the central protuberance. This chain is Large ribosomal subunit protein uL18, found in Psychromonas ingrahamii (strain DSM 17664 / CCUG 51855 / 37).